A 99-amino-acid polypeptide reads, in one-letter code: Small ribosomal subunit protein uS14c (99 aa).

This sequence belongs to the universal ribosomal protein uS14 family. Part of the 30S ribosomal subunit.

It localises to the plastid. Its subcellular location is the chloroplast. In terms of biological role, binds 16S rRNA, required for the assembly of 30S particles. In Welwitschia mirabilis (Tree tumbo), this protein is Small ribosomal subunit protein uS14c.